The chain runs to 29 residues: Prolamin alpha-1 (29 aa).

This is Prolamin alpha-1 from Dactylis glomerata (Orchard grass).